The primary structure comprises 211 residues: Molybdenum cofactor guanylyltransferase (211 aa).

GTP is bound by residues 12–14 (LAG), Lys25, Asn53, Asp71, and Asp101. Mg(2+) is bound at residue Asp101.

The protein belongs to the MobA family. As to quaternary structure, monomer. The cofactor is Mg(2+).

The protein localises to the cytoplasm. The catalysed reaction is Mo-molybdopterin + GTP + H(+) = Mo-molybdopterin guanine dinucleotide + diphosphate. Its function is as follows. Transfers a GMP moiety from GTP to Mo-molybdopterin (Mo-MPT) cofactor (Moco or molybdenum cofactor) to form Mo-molybdopterin guanine dinucleotide (Mo-MGD) cofactor. This is Molybdenum cofactor guanylyltransferase from Acidovorax ebreus (strain TPSY) (Diaphorobacter sp. (strain TPSY)).